A 313-amino-acid polypeptide reads, in one-letter code: Porphobilinogen deaminase (313 aa).

Cys242 is modified (S-(dipyrrolylmethanemethyl)cysteine).

Belongs to the HMBS family. As to quaternary structure, monomer. Requires dipyrromethane as cofactor.

The catalysed reaction is 4 porphobilinogen + H2O = hydroxymethylbilane + 4 NH4(+). It participates in porphyrin-containing compound metabolism; protoporphyrin-IX biosynthesis; coproporphyrinogen-III from 5-aminolevulinate: step 2/4. Functionally, tetrapolymerization of the monopyrrole PBG into the hydroxymethylbilane pre-uroporphyrinogen in several discrete steps. The sequence is that of Porphobilinogen deaminase from Pseudomonas fluorescens (strain SBW25).